The chain runs to 261 residues: Vacuolar iron transporter (261 aa).

The helical transmembrane segment at 66-86 (GQVLIAALAALFAGALSMAVG) threads the bilayer. Fe cation-binding residues include E105, E108, E116, E119, and E154. Helical transmembrane passes span 170 to 190 (MVSF…GAWI), 197 to 217 (IGAI…VGAF), and 233 to 253 (GGAL…TLNI).

Belongs to the CCC1 family.

It localises to the vacuole membrane. It catalyses the reaction Fe(2+)(in) = Fe(2+)(out). Functionally, vacuolar iron transporter involved in the transfer of iron ions from the cytosol to the vacuole for intracellular iron storage. The sequence is that of Vacuolar iron transporter from Acanthamoeba castellanii (strain ATCC 30010 / Neff).